Consider the following 208-residue polypeptide: Uracil phosphoribosyltransferase (208 aa).

5-phospho-alpha-D-ribose 1-diphosphate-binding positions include Arg78, Arg103, and 130-138; that span reads DPMLATGGS. Uracil-binding positions include Ile193 and 198–200; that span reads GDA. A 5-phospho-alpha-D-ribose 1-diphosphate-binding site is contributed by Asp199.

Belongs to the UPRTase family. Mg(2+) serves as cofactor.

The enzyme catalyses UMP + diphosphate = 5-phospho-alpha-D-ribose 1-diphosphate + uracil. It participates in pyrimidine metabolism; UMP biosynthesis via salvage pathway; UMP from uracil: step 1/1. Its activity is regulated as follows. Allosterically activated by GTP. Functionally, catalyzes the conversion of uracil and 5-phospho-alpha-D-ribose 1-diphosphate (PRPP) to UMP and diphosphate. This is Uracil phosphoribosyltransferase from Enterobacter sp. (strain 638).